A 969-amino-acid chain; its full sequence is Leucine--tRNA ligase (969 aa).

A 'HIGH' region motif is present at residues 45–55 (PYTNAPLHIGH). Positions 649 to 653 (KMSKS) match the 'KMSKS' region motif. K652 contributes to the ATP binding site.

It belongs to the class-I aminoacyl-tRNA synthetase family.

The protein resides in the cytoplasm. The catalysed reaction is tRNA(Leu) + L-leucine + ATP = L-leucyl-tRNA(Leu) + AMP + diphosphate. The chain is Leucine--tRNA ligase from Staphylothermus marinus (strain ATCC 43588 / DSM 3639 / JCM 9404 / F1).